We begin with the raw amino-acid sequence, 126 residues long: Prefoldin subunit beta (126 aa).

This sequence belongs to the prefoldin subunit beta family. In terms of assembly, heterohexamer of two alpha and four beta subunits.

The protein localises to the cytoplasm. Functionally, molecular chaperone capable of stabilizing a range of proteins. Seems to fulfill an ATP-independent, HSP70-like function in archaeal de novo protein folding. In Methanocella arvoryzae (strain DSM 22066 / NBRC 105507 / MRE50), this protein is Prefoldin subunit beta.